We begin with the raw amino-acid sequence, 442 residues long: Trigger factor (442 aa).

In terms of domain architecture, PPIase FKBP-type spans 165–250 (DDRVIIDFEG…LQKVMAPELP (86 aa)).

Belongs to the FKBP-type PPIase family. Tig subfamily.

Its subcellular location is the cytoplasm. It carries out the reaction [protein]-peptidylproline (omega=180) = [protein]-peptidylproline (omega=0). Its function is as follows. Involved in protein export. Acts as a chaperone by maintaining the newly synthesized protein in an open conformation. Functions as a peptidyl-prolyl cis-trans isomerase. The polypeptide is Trigger factor (Coxiella burnetii (strain RSA 493 / Nine Mile phase I)).